Consider the following 522-residue polypeptide: DNA primase DnaG (522 aa).

In terms of domain architecture, Toprim spans 171 to 257; sequence DAIIILEGRA…CVEDLVQKEI (87 aa). Mg(2+) contacts are provided by Glu-177, Asp-219, and Asp-221.

This sequence belongs to the archaeal DnaG primase family. Forms a ternary complex with MCM helicase and DNA. Component of the archaeal exosome complex. The cofactor is Mg(2+).

The catalysed reaction is ssDNA + n NTP = ssDNA/pppN(pN)n-1 hybrid + (n-1) diphosphate.. RNA polymerase that catalyzes the synthesis of short RNA molecules used as primers for DNA polymerase during DNA replication. Also part of the exosome, which is a complex involved in RNA degradation. Acts as a poly(A)-binding protein that enhances the interaction between heteromeric, adenine-rich transcripts and the exosome. The protein is DNA primase DnaG of Methanosarcina mazei (strain ATCC BAA-159 / DSM 3647 / Goe1 / Go1 / JCM 11833 / OCM 88) (Methanosarcina frisia).